The following is a 367-amino-acid chain: 2-aminoethylphosphonate--pyruvate transaminase (367 aa).

Position 194 is an N6-(pyridoxal phosphate)lysine (Lys194).

It belongs to the class-V pyridoxal-phosphate-dependent aminotransferase family. PhnW subfamily. Homodimer. Pyridoxal 5'-phosphate is required as a cofactor.

The catalysed reaction is (2-aminoethyl)phosphonate + pyruvate = phosphonoacetaldehyde + L-alanine. Functionally, involved in phosphonate degradation. This Salmonella paratyphi A (strain ATCC 9150 / SARB42) protein is 2-aminoethylphosphonate--pyruvate transaminase.